Here is a 947-residue protein sequence, read N- to C-terminus: Protocadherin alpha-4 (947 aa).

The signal sequence occupies residues 1–29; sequence MEFSWGSGQESRRLLLLLLLLAAWEAGNG. 6 Cadherin domains span residues 30–133, 134–242, 243–350, 351–455, 456–565, and 588–678; these read QLHY…PPVF, PATQ…APAF, DRTI…VPDL, EFKS…APAF, AQPE…APAL, and GHVV…APKA. Over 30–697 the chain is Extracellular; sequence QLHYSVSEEA…GPDAALVDVN (668 aa). C96 and C102 are oxidised to a cystine. N-linked (GlcNAc...) asparagine glycans are attached at residues N139, N257, and N265. N548 is a glycosylation site (N-linked (GlcNAc...) asparagine). The helical transmembrane segment at 698–718 threads the bilayer; the sequence is VYLIIAICAVSSLLVLTLLLY. Residues 719 to 947 are Cytoplasmic-facing; the sequence is TALRCSALPT…GNSTTDNSDQ (229 aa). PXXP repeat units follow at residues 734–737, 774–777, 796–799, 829–832, 870–873, and 888–891; these read PGKP, PSLP, PRQP, PGGP, PGNP, and PGSP. The 6 X 4 AA repeats of P-X-X-P stretch occupies residues 734–891; it reads PGKPTLVCSS…PDKFIIPGSP (158 aa). The segment at 738–947 is required for interaction with FYN; the sequence is TLVCSSAVGS…GNSTTDNSDQ (210 aa). Disordered regions lie at residues 754 to 805, 828 to 853, and 868 to 947; these read RRPR…DWRY, GPGG…EVSP, and YGPG…NSDQ. Residues 906–920 show a composition bias toward basic and acidic residues; sequence DKSDFITFGKKEETK.

In terms of assembly, forms homodimers in trans (molecules expressed by two different cells). Forms promiscuous heterodimers in cis (at the plasma membrane of the same cell) with other protocadherins. Interacts with FYN.

Its subcellular location is the cell membrane. In terms of biological role, calcium-dependent cell-adhesion protein involved in cells self-recognition and non-self discrimination. Thereby, it is involved in the establishment and maintenance of specific neuronal connections in the brain. This Homo sapiens (Human) protein is Protocadherin alpha-4.